The chain runs to 220 residues: Guanylate kinase (220 aa).

The 180-residue stretch at 11–190 (GVLFVLSSPS…CYGEVMAILR (180 aa)) folds into the Guanylate kinase-like domain. 18–25 (SPSGAGKT) is a binding site for ATP.

This sequence belongs to the guanylate kinase family.

It localises to the cytoplasm. It carries out the reaction GMP + ATP = GDP + ADP. Functionally, essential for recycling GMP and indirectly, cGMP. The sequence is that of Guanylate kinase from Sphingopyxis alaskensis (strain DSM 13593 / LMG 18877 / RB2256) (Sphingomonas alaskensis).